Here is a 433-residue protein sequence, read N- to C-terminus: Zinc finger and SCAN domain-containing protein 4 (433 aa).

In terms of domain architecture, SCAN box spans 44 to 126 (RMVLNSFQDS…RFIEDLTDDS (83 aa)). 3 stretches are compositionally biased toward polar residues: residues 165–185 (TTRE…SLET), 195–210 (GWNS…ENIT), and 277–299 (QPEQ…STCE). Disordered stretches follow at residues 165–210 (TTRE…ENIT) and 275–301 (ISQP…CEVH). C2H2-type zinc fingers lie at residues 312 to 334 (YKCE…QRRH), 340 to 362 (FVCP…QIIH), 368 to 390 (FTCS…ERIH), and 396 to 418 (YTCP…MRTH).

The protein resides in the nucleus. Its subcellular location is the chromosome. The protein localises to the telomere. In terms of biological role, embryonic stem (ES) cell-specific transcription factor required to regulate ES cell pluripotency. Binds telomeres and plays a key role in genomic stability in ES cells by regulating telomere elongation. Acts as an activator of spontaneous telomere sister chromatid exchange (T-SCE) and telomere elongation in undifferentiated ES cells. The protein is Zinc finger and SCAN domain-containing protein 4 (ZSCAN4) of Homo sapiens (Human).